The following is a 471-amino-acid chain: Ribulose bisphosphate carboxylase large chain (471 aa).

Lys5 bears the N6,N6,N6-trimethyllysine mark. The substrate site is built by Asn114 and Thr164. The active-site Proton acceptor is the Lys166. Lys168 lines the substrate pocket. Residues Lys192, Asp194, and Glu195 each contribute to the Mg(2+) site. Residue Lys192 is modified to N6-carboxylysine. His285 (proton acceptor) is an active-site residue. Substrate-binding residues include Arg286, His318, and Ser370.

It belongs to the RuBisCO large chain family. Type I subfamily. In terms of assembly, heterohexadecamer of 8 large chains and 8 small chains; disulfide-linked. The disulfide link is formed within the large subunit homodimers. Requires Mg(2+) as cofactor. In terms of processing, the disulfide bond which can form in the large chain dimeric partners within the hexadecamer appears to be associated with oxidative stress and protein turnover.

The protein localises to the plastid. It localises to the chloroplast. It carries out the reaction 2 (2R)-3-phosphoglycerate + 2 H(+) = D-ribulose 1,5-bisphosphate + CO2 + H2O. It catalyses the reaction D-ribulose 1,5-bisphosphate + O2 = 2-phosphoglycolate + (2R)-3-phosphoglycerate + 2 H(+). Its function is as follows. RuBisCO catalyzes two reactions: the carboxylation of D-ribulose 1,5-bisphosphate, the primary event in carbon dioxide fixation, as well as the oxidative fragmentation of the pentose substrate in the photorespiration process. Both reactions occur simultaneously and in competition at the same active site. The sequence is that of Ribulose bisphosphate carboxylase large chain from Anthocleista grandiflora (Forest fever tree).